Reading from the N-terminus, the 204-residue chain is Dephospho-CoA kinase (204 aa).

Positions 4-201 (VIGLTGGIAS…EKYLAMCKKN (198 aa)) constitute a DPCK domain. 12–17 (ASGKTT) contributes to the ATP binding site.

Belongs to the CoaE family.

The protein resides in the cytoplasm. The enzyme catalyses 3'-dephospho-CoA + ATP = ADP + CoA + H(+). It participates in cofactor biosynthesis; coenzyme A biosynthesis; CoA from (R)-pantothenate: step 5/5. In terms of biological role, catalyzes the phosphorylation of the 3'-hydroxyl group of dephosphocoenzyme A to form coenzyme A. The chain is Dephospho-CoA kinase from Vibrio parahaemolyticus serotype O3:K6 (strain RIMD 2210633).